A 421-amino-acid polypeptide reads, in one-letter code: Aspartokinase (421 aa).

An ATP-binding site is contributed by 7-10; that stretch reads KYGG. A substrate-binding site is contributed by 25–30; the sequence is RIVATK. Serine 41 contacts ATP. Substrate is bound by residues 45–49, glutamate 74, 125–126, 151–154, and serine 154; these read DTTDD, LE, and RGGS. ATP is bound by residues 174–175, 180–185, and lysine 210; these read TD and FSADPR. ACT domains lie at 267–348 and 349–421; these read VTIV…GKVS and LIGA…GTGR. Substrate contacts are provided by residues aspartate 274, 274–279, 292–294, glutamine 298, 360–361, 374–375, and 381–382; these read DIPGYA, NID, VT, NI, and SE.

The protein belongs to the aspartokinase family. Heterotetramer consisting of 2 isoforms Alpha (catalytic and regulation) and of a homodimer of 2 isoforms Beta (regulation).

It carries out the reaction L-aspartate + ATP = 4-phospho-L-aspartate + ADP. The protein operates within amino-acid biosynthesis; L-lysine biosynthesis via DAP pathway; (S)-tetrahydrodipicolinate from L-aspartate: step 1/4. Its pathway is amino-acid biosynthesis; L-methionine biosynthesis via de novo pathway; L-homoserine from L-aspartate: step 1/3. It participates in amino-acid biosynthesis; L-threonine biosynthesis; L-threonine from L-aspartate: step 1/5. Feedback inhibition by lysine and threonine. Catalyzes the phosphorylation of the beta-carboxyl group of aspartic acid with ATP to yield 4-phospho-L-aspartate, which is involved in the branched biosynthetic pathway leading to the biosynthesis of amino acids lysine, threonine, isoleucine and methionine. The sequence is that of Aspartokinase (ask) from Mycobacterium bovis (strain ATCC BAA-935 / AF2122/97).